Here is a 1129-residue protein sequence, read N- to C-terminus: Serine/threonine-protein kinase 11-interacting protein (1129 aa).

LRR repeat units lie at residues 107–128, 130–150, 162–183, 185–206, 208–229, 232–253, 254–275, and 279–300; these read SLRS…RSVY, QLEV…IALC, VLHT…LELL, SLKI…LKVL, ELQY…SVGN, KLHS…ENLP, NLQH…SGLA, and NLKQ…RALT. 4 disordered regions span residues 335 to 392, 428 to 475, 654 to 678, and 696 to 724; these read RLQP…RRGQ, DPEY…HVAP, GDIY…NHTG, and NPTG…GLAA. Positions 337–355 are enriched in polar residues; sequence QPSSSATESSCTGDLTDSY. A compositionally biased stretch (basic residues) spans 365-374; it reads LPRKKSRVKV. The segment covering 381 to 391 has biased composition (basic and acidic residues); the sequence is ERSDSEYERRG. Residues 436 to 447 are compositionally biased toward pro residues; that stretch reads HSPPPRASPSPT. Low complexity predominate over residues 448–458; that stretch reads APSSVPKQKSP.

It belongs to the STK11IP family.

It is found in the cytoplasm. This Xenopus tropicalis (Western clawed frog) protein is Serine/threonine-protein kinase 11-interacting protein (stk11ip).